Reading from the N-terminus, the 258-residue chain is Short-chain dehydrogenase chyC (258 aa).

NADP(+) contacts are provided by Arg-37, Asp-55, Asn-81, Tyr-154, Lys-158, Val-185, and Thr-187. Residue Tyr-154 is the Proton donor of the active site. The Lowers pKa of active site Tyr role is filled by Lys-158.

The protein belongs to the short-chain dehydrogenases/reductases (SDR) family.

Short-chain dehydrogenase; part of the gene cluster that mediates the biosynthesis of the yellow pigment chrysogine. the NRPS chyA mediates the condensation of anthranilic acid and alanine into the intermediate 2-(2-aminopropanamido)benzoic acid. The remainder of the pathway is highly branched yielding at least 13 chrysogine-related compounds. The malonyl transferase chyE converts 2-(2-aminopropanamido)benzoic acid and 2-(2-aminopropanamido)benzamidine into 2-(2-(2-carboxyacetamido)propanamido)benzoic acid and 3-((1-((2-carbamoylphenyl)amino)-1-oxopropan-2-yl)amino)-3-oxopropanoic acid, respectively. ChyD is an amidase, being responsible for the amidation of the carboxylic acid moiety of 2-(2-aminopropanamido)benzoic acid, 2-(2-(2-carboxyacetamido)propanamido)benzoic acid and 2-(2-((4-amino-1-carboxy-4-oxobutyl)amino)propanamido)benzoic acid. ChyC is involved in the same reactions as ChyD, but plays a more minor role in the amidation reactions compared to chyD. The oxidoreductases chyH and chyM are involved in oxidation reactions that form N-pyruvoylanthranilamide from 2-(2-aminopropanamido)benzamidine and (1-((2-carbamoylphenyl)amino)-1-oxopropan-2-yl)glutamine, respectively. N-pyruvoylanthranilamide is further converted via two further branches in the pathway, yielding chrysogine and additional chrysogine-related coumpounds. Chrysogine is likely formed by a spontaneous ring closure from N-pyruvoylanthranilamide. The polypeptide is Short-chain dehydrogenase chyC (Penicillium rubens (strain ATCC 28089 / DSM 1075 / NRRL 1951 / Wisconsin 54-1255) (Penicillium chrysogenum)).